The primary structure comprises 231 residues: NADH-ubiquinone oxidoreductase chain 4 (231 aa).

The next 7 membrane-spanning stretches (helical) occupy residues P1 to I21, L34 to L54, I63 to G85, A89 to Y111, I128 to P148, L156 to S176, and L211 to I231.

This sequence belongs to the complex I subunit 4 family.

Its subcellular location is the mitochondrion membrane. The catalysed reaction is a ubiquinone + NADH + 5 H(+)(in) = a ubiquinol + NAD(+) + 4 H(+)(out). Its function is as follows. Core subunit of the mitochondrial membrane respiratory chain NADH dehydrogenase (Complex I) that is believed to belong to the minimal assembly required for catalysis. Complex I functions in the transfer of electrons from NADH to the respiratory chain. The immediate electron acceptor for the enzyme is believed to be ubiquinone. The protein is NADH-ubiquinone oxidoreductase chain 4 (MT-ND4) of Crotalus adamanteus (Eastern diamondback rattlesnake).